A 182-amino-acid polypeptide reads, in one-letter code: Nudix hydrolase 17, mitochondrial (182 aa).

Residues 1–26 (MGVEKMVCLASRTGRQFQRYNKGRRQ) constitute a mitochondrion transit peptide. The region spanning 27-158 (VVGCVPYRFK…WMKEALDVLV (132 aa)) is the Nudix hydrolase domain. Residues 65 to 86 (GGWELDESVEEAASRECLEEAG) carry the Nudix box motif. Residues Glu-80 and Glu-84 each coordinate Mg(2+).

It belongs to the Nudix hydrolase family. Requires Mg(2+) as cofactor. Mn(2+) is required as a cofactor. As to expression, expressed in roots, leaves, stems and inflorescences.

It localises to the mitochondrion. Its function is as follows. Probably mediates the hydrolysis of some nucleoside diphosphate derivatives. The protein is Nudix hydrolase 17, mitochondrial (NUDT17) of Arabidopsis thaliana (Mouse-ear cress).